The chain runs to 124 residues: Cytoinsectotoxin-4 (124 aa).

The first 19 residues, 1-19 (MKCFILAAALVLAFACIAA), serve as a signal peptide directing secretion. The propeptide occupies 20-62 (SEPAETENEDLDDLSDLEDEEWLDELEEAAEYLESLREFEESR). The residue at position 123 (phenylalanine 123) is a Phenylalanine amide.

It belongs to the cationic peptide 06 (cytoinsectotoxin) family. In terms of tissue distribution, expressed by the venom gland.

Its subcellular location is the secreted. Its function is as follows. Insecticidal and antimicrobial peptide. Has insecticidal activity against larvae of flesh fly S.carnaria. Has antibacterial activity against Gram-positive bacterium B.subtilis B-501 (MIC=2.5 uM) and Gram-negative bacterium E.coli DH5alpha (MIC=10 uM). This Lachesana tarabaevi (Spider) protein is Cytoinsectotoxin-4.